A 629-amino-acid chain; its full sequence is 1-deoxy-D-xylulose-5-phosphate synthase (629 aa).

Residues His-72 and 113 to 115 contribute to the thiamine diphosphate site; that span reads GHA. Residue Asp-144 coordinates Mg(2+). Residues 145 to 146, Asn-174, Tyr-287, and Glu-370 each bind thiamine diphosphate; that span reads GA. Asn-174 is a Mg(2+) binding site.

The protein belongs to the transketolase family. DXPS subfamily. As to quaternary structure, homodimer. Mg(2+) serves as cofactor. Requires thiamine diphosphate as cofactor.

It carries out the reaction D-glyceraldehyde 3-phosphate + pyruvate + H(+) = 1-deoxy-D-xylulose 5-phosphate + CO2. The protein operates within metabolic intermediate biosynthesis; 1-deoxy-D-xylulose 5-phosphate biosynthesis; 1-deoxy-D-xylulose 5-phosphate from D-glyceraldehyde 3-phosphate and pyruvate: step 1/1. Its function is as follows. Catalyzes the acyloin condensation reaction between C atoms 2 and 3 of pyruvate and glyceraldehyde 3-phosphate to yield 1-deoxy-D-xylulose-5-phosphate (DXP). The protein is 1-deoxy-D-xylulose-5-phosphate synthase of Prochlorococcus marinus (strain AS9601).